The following is a 174-amino-acid chain: Adenylate kinase (174 aa).

Positions Ser-12–Val-41 are NMP. Residues Thr-13, Arg-18, Gly-39–Val-41, Gly-67–Arg-70, and Gln-74 each bind AMP. Residues Gly-104 to Asp-141 are LID. ATP contacts are provided by residues Arg-105 and Thr-114–Tyr-115. The AMP site is built by Arg-138 and Arg-149.

Belongs to the adenylate kinase family. As to quaternary structure, monomer.

It localises to the cytoplasm. It catalyses the reaction AMP + ATP = 2 ADP. Its pathway is purine metabolism; AMP biosynthesis via salvage pathway; AMP from ADP: step 1/1. Its function is as follows. Catalyzes the reversible transfer of the terminal phosphate group between ATP and AMP. Plays an important role in cellular energy homeostasis and in adenine nucleotide metabolism. The chain is Adenylate kinase from Neisseria cinerea.